The primary structure comprises 593 residues: MDVAFPGMERHDEKNPPGDDGTKPTGGKKARPAIKIKWYWKGLILLVELCIGDYLLDRYVFGGVMLRTTIAYAVLARVGLDYKLHYGKDCWLARHPEEDLHHRNAQRVCTMLKWNGGLYLKAGQAVAMQGSVLPEEYQRMFGEMFDDAPHSSWSDVEKVIKQDFGGRSIEDVFGVAPSDQQGDSQFVFEREPRASASIAQVHYARLPDGRGLAVKVQRREISKQVSWDLWSMKLMTEYTAWVTGLPMGGMGQFVADRVMQETDFEHEASNSEKMADLIATDSSLRDRVYIPKVYREFTSKRVLTTEWVDAVQLWDRDAITGQVAPSRSATSDKPGLGLRLDDVMRTVVELFSAQMFSWGFVHCDPHPGNILVRQNPKRPDSAQVVLLDHGLYITMSDKLRRQYARFWKALVTNDDASLQRVSREWGMKSADAWADASLMRPYKNPSSSDDESGESWQRTKETPEERKQRMIDEAAAYLGDEGLFPRELLFLERNITIVQGNNRFLGSPVNRIKLIGSCALKAIRDDGQGKESIRERISTRVALLSLDLAFWWSAMKQYFGYGEGLEQELKEAEDRQLRETKDAVAELFGITVN.

2 disordered regions span residues 1–29 (MDVA…GGKK) and 441–467 (PYKN…EERK). 2 stretches are compositionally biased toward basic and acidic residues: residues 8-22 (MERH…DDGT) and 457-467 (QRTKETPEERK).

This sequence belongs to the protein kinase superfamily. ADCK protein kinase family.

Functionally, ABC1 family protein; part of the gene cluster that mediates the biosynthesis of the lipopeptide antibiotics leucinostatins that show extensive biological activities, including antimalarial, antiviral, antibacterial, antifungal, and antitumor activities, as well as phytotoxic. The function of lcsO within the leucinostatins biosynthesis has not been identified yet. The sequence is that of ABC1 family protein lscO from Purpureocillium lilacinum (Paecilomyces lilacinus).